A 467-amino-acid chain; its full sequence is Mitochondrial adenyl nucleotide antiporter SLC25A23 (467 aa).

Positions 1–148 (MRGGSSDAER…DHFLLHSLEN (148 aa)) are regulatory N-terminal domain. The Mitochondrial intermembrane segment spans residues 1–187 (MRGGSSDAER…EKLTGMWWKQ (187 aa)). EF-hand domains lie at 9-44 (ERRQ…LGRG), 76-111 (EREQ…LGIS), and 112-147 (ISLE…HSLE). Positions 22, 24, 26, 28, and 33 each coordinate Ca(2+). The disordered stretch occupies residues 39 to 61 (ARLGRGDPDRAQQGVSSDWDADP). D89, N91, D93, H95, and E100 together coordinate Ca(2+). The linker region stretch occupies residues 149–158 (VEDVLYFWKH). The tract at residues 164–467 (IGECLTVPDE…MKQALGVTSR (304 aa)) is C-terminal transmembrane transporter domain. Solcar repeat units lie at residues 182-268 (GMWW…IKRA), 276-361 (LHVQ…LKNR), and 373-461 (PGIL…MKQA). A helical membrane pass occupies residues 188–205 (LVAGAVAGAVSRTGTAPL). Residues 206–242 (DRLKVFMQVHASKSNRLNILGGLRNMIQEGGVLSLWR) lie on the Mitochondrial matrix side of the membrane. A helical membrane pass occupies residues 243–262 (GNGINVLKIAPESAIKFMAY). The Mitochondrial intermembrane portion of the chain corresponds to 263 to 285 (EQIKRAIRGQQETLHVQERFVAG). The chain crosses the membrane as a helical span at residues 286–299 (SLAGATAQTIIYPM). The Mitochondrial matrix portion of the chain corresponds to 300–335 (EVLKTRLTLRRTGQYKGLLDCAKRILEREGPRAFYR). The helical transmembrane segment at 336 to 355 (GYLPNVLGIIPYAGIDLAVY) threads the bilayer. The Mitochondrial intermembrane segment spans residues 356 to 378 (ETLKNRWLQQYSHESANPGILVL). The helical transmembrane segment at 379–396 (LGCGTISSTCGQIASYPL) threads the bilayer. Over 397–435 (ALVRTRMQAQASIEGGPQVSMVGLLRHILSQEGVWGLYR) the chain is Mitochondrial matrix. A helical membrane pass occupies residues 436-455 (GIAPNFMKVIPAVSISYVVY). Topologically, residues 456–467 (ENMKQALGVTSR) are mitochondrial intermembrane.

It belongs to the mitochondrial carrier (TC 2.A.29) family. As to quaternary structure, interacts with MCU. Interacts with MICU1.

It is found in the mitochondrion inner membrane. It carries out the reaction Mg(2+)(out) + phosphate(in) + ATP(out) = Mg(2+)(in) + phosphate(out) + ATP(in). The enzyme catalyses ADP(out) + phosphate(in) + H(+)(out) = ADP(in) + phosphate(out) + H(+)(in). It catalyses the reaction AMP(out) + phosphate(in) = AMP(in) + phosphate(out). The catalysed reaction is phosphate(in) + ATP(out) + 2 H(+)(out) = phosphate(out) + ATP(in) + 2 H(+)(in). It carries out the reaction dADP(in) + ADP(out) = dADP(out) + ADP(in). The enzyme catalyses Mg(2+)(in) + ADP(out) + ATP(in) + H(+)(out) = Mg(2+)(out) + ADP(in) + ATP(out) + H(+)(in). It catalyses the reaction ADP(out) + diphosphate(in) = ADP(in) + diphosphate(out). The catalysed reaction is dAMP(in) + ADP(out) + H(+)(out) = dAMP(out) + ADP(in) + H(+)(in). It carries out the reaction 3'-AMP(in) + ADP(out) + H(+)(out) = 3'-AMP(out) + ADP(in) + H(+)(in). The enzyme catalyses dAMP(out) + phosphate(in) = dAMP(in) + phosphate(out). It catalyses the reaction 3'-AMP(out) + phosphate(in) = 3'-AMP(in) + phosphate(out). The catalysed reaction is dADP(out) + phosphate(in) + H(+)(out) = dADP(in) + phosphate(out) + H(+)(in). With respect to regulation, activated by an increase in cytosolic calcium levels that induce a conformational change of the N-terminal regulatory domain, uncapping the channel and allowing transport. Electroneutral antiporter that mediates the transport of adenine nucleotides through the inner mitochondrial membrane. Originally identified as an ATP-magnesium/inorganic phosphate antiporter, it also acts as a broad specificity adenyl nucleotide antiporter. By regulating the mitochondrial matrix adenine nucleotide pool could adapt to changing cellular energetic demands and indirectly regulate adenine nucleotide-dependent metabolic pathways. Also acts as a regulator of mitochondrial calcium uptake and can probably transport trace amounts of other divalent metal cations in complex with ATP. In vitro, a low activity is also observed with guanyl and pyrimidine nucleotides. In Mus musculus (Mouse), this protein is Mitochondrial adenyl nucleotide antiporter SLC25A23.